The primary structure comprises 96 residues: Co-chaperonin GroES (96 aa).

This sequence belongs to the GroES chaperonin family. As to quaternary structure, heptamer of 7 subunits arranged in a ring. Interacts with the chaperonin GroEL.

It is found in the cytoplasm. Together with the chaperonin GroEL, plays an essential role in assisting protein folding. The GroEL-GroES system forms a nano-cage that allows encapsulation of the non-native substrate proteins and provides a physical environment optimized to promote and accelerate protein folding. GroES binds to the apical surface of the GroEL ring, thereby capping the opening of the GroEL channel. This chain is Co-chaperonin GroES, found in Thiobacillus denitrificans (strain ATCC 25259 / T1).